The following is a 51-amino-acid chain: Sperm protamine P1 (51 aa).

It belongs to the protamine P1 family. As to expression, testis.

The protein resides in the nucleus. The protein localises to the chromosome. Protamines substitute for histones in the chromatin of sperm during the haploid phase of spermatogenesis. They compact sperm DNA into a highly condensed, stable and inactive complex. The polypeptide is Sperm protamine P1 (PRM1) (Trachypithecus johnii (Nilgiri langur)).